Reading from the N-terminus, the 288-residue chain is Undecaprenyl-diphosphatase (288 aa).

The next 8 membrane-spanning stretches (helical) occupy residues 25–45 (GITE…NEFL), 53–73 (FIDM…MVIY), 93–113 (WKLW…GLLL), 121–141 (LSNF…FIWI), 171–191 (VLSI…GIIV), 196–216 (SVAA…YSGL), 231–251 (GQAA…LFVI), and 263–283 (FTVF…YGAV).

This sequence belongs to the UppP family.

The protein resides in the cell membrane. The enzyme catalyses di-trans,octa-cis-undecaprenyl diphosphate + H2O = di-trans,octa-cis-undecaprenyl phosphate + phosphate + H(+). Its function is as follows. Catalyzes the dephosphorylation of undecaprenyl diphosphate (UPP). Confers resistance to bacitracin. This Streptococcus thermophilus (strain CNRZ 1066) protein is Undecaprenyl-diphosphatase.